The following is a 363-amino-acid chain: Outer membrane porin F (363 aa).

The first 22 residues, 1–22 (MMKRKILAAVIPALLAAATANA), serve as a signal peptide directing secretion. Residues 23–28 (AEIYNK) form a beta stranded membrane-spanning segment. Position 29 (aspartate 29) is a topological domain, periplasmic. A beta stranded transmembrane segment spans residues 30-45 (GNKLDLYGKAVGRHVW). Residues 46-56 (TTTGDSKNADQ) lie on the Extracellular side of the membrane. The chain crosses the membrane as a beta stranded span at residues 57-69 (TYAQIGFKGETQI). Topologically, residues 70–71 (NT) are periplasmic. A beta stranded transmembrane segment spans residues 72–84 (DLTGFGQWEYRTK). At 85-99 (ADRAEGEQQNSNLVR) the chain is on the extracellular side. The beta stranded transmembrane segment at 100 to 108 (LAFAGLKYA) threads the bilayer. Glutamate 109 is a topological domain (periplasmic). The beta stranded transmembrane segment at 110 to 117 (VGSIDYGR) threads the bilayer. Topologically, residues 118–154 (NYGIVYDVESYTDMAPYFSGETWGGAYTDNYMTSRAG) are extracellular. A beta stranded membrane pass occupies residues 155–161 (GLLTYRN). At 162 to 169 (SDFFGLVD) the chain is on the periplasmic side. A beta stranded transmembrane segment spans residues 170 to 181 (GLSFGIQYQGKN). The Extracellular segment spans residues 182–192 (QDNHSINSQNG). The chain crosses the membrane as a beta stranded span at residues 193–203 (DGVGYTMAYEF). Aspartate 204 is a topological domain (periplasmic). The beta stranded transmembrane segment at 205–217 (GFGVTAAYSNSKR) threads the bilayer. The Extracellular portion of the chain corresponds to 218–230 (TNDQQDRDGNGDR). A beta stranded membrane pass occupies residues 231 to 242 (AESWAVGAKYDA). Residue asparagine 243 is a topological domain, periplasmic. A beta stranded membrane pass occupies residues 244–256 (NVYLAAVYAETRN). At 257 to 272 (MSIVENTVTDTVEMAN) the chain is on the extracellular side. A beta stranded transmembrane segment spans residues 273 to 285 (KTQNLEVVAQYQF). At 286-287 (DF) the chain is on the periplasmic side. The beta stranded transmembrane segment at 288–301 (GLRPAISYVQSKGK) threads the bilayer. Residues 302–312 (QLNGADGSADL) lie on the Extracellular side of the membrane. A beta stranded transmembrane segment spans residues 313-324 (AKYIQAGATYYF). Residues 325 to 326 (NK) are Periplasmic-facing. The chain crosses the membrane as a beta stranded span at residues 327 to 336 (NMNVWVDYRF). The Extracellular segment spans residues 337–353 (NLLDENDYSSSYVGTDD). The beta stranded transmembrane segment at 354–363 (QAAVGITYQF) threads the bilayer.

This sequence belongs to the Gram-negative porin family. In terms of assembly, homotrimer. Forms mixed heterotrimers with OmpC and with PhoE; other mixed heterotrimers with other porins are also probable.

It localises to the cell outer membrane. In terms of biological role, forms pores that allow passive diffusion of small molecules across the outer membrane. This Salmonella typhi protein is Outer membrane porin F (ompF).